A 303-amino-acid chain; its full sequence is Signal recognition particle receptor FtsY (303 aa).

GTP contacts are provided by residues 108 to 115 (GVNGVGKT), 190 to 194 (DTAGR), and 254 to 257 (TKLD).

It belongs to the GTP-binding SRP family. FtsY subfamily. In terms of assembly, part of the signal recognition particle protein translocation system, which is composed of SRP and FtsY. SRP is a ribonucleoprotein composed of Ffh and a 4.5S RNA molecule.

It is found in the cell inner membrane. The protein localises to the cytoplasm. The catalysed reaction is GTP + H2O = GDP + phosphate + H(+). Functionally, involved in targeting and insertion of nascent membrane proteins into the cytoplasmic membrane. Acts as a receptor for the complex formed by the signal recognition particle (SRP) and the ribosome-nascent chain (RNC). Interaction with SRP-RNC leads to the transfer of the RNC complex to the Sec translocase for insertion into the membrane, the hydrolysis of GTP by both Ffh and FtsY, and the dissociation of the SRP-FtsY complex into the individual components. The polypeptide is Signal recognition particle receptor FtsY (Rickettsia typhi (strain ATCC VR-144 / Wilmington)).